The primary structure comprises 25 residues: Xenoposin precursor fragment R2 (25 aa).

In terms of tissue distribution, expressed by the skin glands.

The protein resides in the secreted. In terms of biological role, antimicrobial peptide. The polypeptide is Xenoposin precursor fragment R2 (Xenopus ruwenzoriensis (Uganda clawed frog)).